Consider the following 599-residue polypeptide: Elongation factor 4 (599 aa).

The 183-residue stretch at Lys-2 to Glu-184 folds into the tr-type G domain. Residues Asp-14 to Thr-19 and Asn-131 to Asp-134 contribute to the GTP site.

This sequence belongs to the TRAFAC class translation factor GTPase superfamily. Classic translation factor GTPase family. LepA subfamily.

It localises to the cell inner membrane. It catalyses the reaction GTP + H2O = GDP + phosphate + H(+). Functionally, required for accurate and efficient protein synthesis under certain stress conditions. May act as a fidelity factor of the translation reaction, by catalyzing a one-codon backward translocation of tRNAs on improperly translocated ribosomes. Back-translocation proceeds from a post-translocation (POST) complex to a pre-translocation (PRE) complex, thus giving elongation factor G a second chance to translocate the tRNAs correctly. Binds to ribosomes in a GTP-dependent manner. The protein is Elongation factor 4 of Erwinia tasmaniensis (strain DSM 17950 / CFBP 7177 / CIP 109463 / NCPPB 4357 / Et1/99).